We begin with the raw amino-acid sequence, 219 residues long: Large ribosomal subunit protein bL25 (219 aa).

The interval 176-219 (VTVVPPTDEPSEEEVEAMEGESATEEPEVVGEDKEDDEEENKED) is disordered. Residues 184–219 (EPSEEEVEAMEGESATEEPEVVGEDKEDDEEENKED) show a composition bias toward acidic residues.

It belongs to the bacterial ribosomal protein bL25 family. CTC subfamily. In terms of assembly, part of the 50S ribosomal subunit; part of the 5S rRNA/L5/L18/L25 subcomplex. Contacts the 5S rRNA. Binds to the 5S rRNA independently of L5 and L18.

Its function is as follows. This is one of the proteins that binds to the 5S RNA in the ribosome where it forms part of the central protuberance. This is Large ribosomal subunit protein bL25 from Staphylococcus epidermidis (strain ATCC 35984 / DSM 28319 / BCRC 17069 / CCUG 31568 / BM 3577 / RP62A).